The primary structure comprises 251 residues: 2,3-bisphosphoglycerate-dependent phosphoglycerate mutase (251 aa).

Substrate is bound by residues R11–N18, T24–G25, R63, E90–Y93, K101, R117–R118, and G185–N186. Catalysis depends on H12, which acts as the Tele-phosphohistidine intermediate. E90 acts as the Proton donor/acceptor in catalysis. The interval R117–A142 is disordered.

This sequence belongs to the phosphoglycerate mutase family. BPG-dependent PGAM subfamily.

The enzyme catalyses (2R)-2-phosphoglycerate = (2R)-3-phosphoglycerate. Its pathway is carbohydrate degradation; glycolysis; pyruvate from D-glyceraldehyde 3-phosphate: step 3/5. Functionally, catalyzes the interconversion of 2-phosphoglycerate and 3-phosphoglycerate. The polypeptide is 2,3-bisphosphoglycerate-dependent phosphoglycerate mutase (Clavibacter michiganensis subsp. michiganensis (strain NCPPB 382)).